Reading from the N-terminus, the 492-residue chain is Trypanothione reductase (492 aa).

36 to 52 (DVQMVHGPPFFSALGGT) is a binding site for FAD. An intrachain disulfide couples Cys53 to Cys58. Residue His461 is the Proton acceptor of the active site.

This sequence belongs to the class-I pyridine nucleotide-disulfide oxidoreductase family. In terms of assembly, homodimer. The cofactor is FAD.

It is found in the cytoplasm. It catalyses the reaction trypanothione + NADP(+) = trypanothione disulfide + NADPH + H(+). In terms of biological role, trypanothione is the parasite analog of glutathione; this enzyme is the equivalent of glutathione reductase. This Trypanosoma cruzi protein is Trypanothione reductase (TPR).